Here is a 106-residue protein sequence, read N- to C-terminus: Large ribosomal subunit protein uL24 (106 aa).

It belongs to the universal ribosomal protein uL24 family. In terms of assembly, part of the 50S ribosomal subunit.

Its function is as follows. One of two assembly initiator proteins, it binds directly to the 5'-end of the 23S rRNA, where it nucleates assembly of the 50S subunit. One of the proteins that surrounds the polypeptide exit tunnel on the outside of the subunit. The sequence is that of Large ribosomal subunit protein uL24 from Porphyromonas gingivalis (strain ATCC 33277 / DSM 20709 / CIP 103683 / JCM 12257 / NCTC 11834 / 2561).